Here is a 435-residue protein sequence, read N- to C-terminus: Arginine/serine-rich coiled-coil protein 2 (435 aa).

Basic and acidic residues predominate over residues 1–27 (MAASDTERDGLAPEKTSPDRDKKKEQS). The segment at 1–230 (MAASDTERDG…PSPPPFRGRN (230 aa)) is disordered. At A2 the chain carries N-acetylalanine. S4 is modified (phosphoserine). 2 positions are modified to phosphothreonine: T6 and T16. S17, S30, and S32 each carry phosphoserine. Basic residues predominate over residues 35–51 (ASKHHYSRSRSRSRERK). Positions 66 to 111 (RSKEARRHESKDKSSKKHKSEEHNDKEHSSDKGRERLNSSENGEDR) are enriched in basic and acidic residues. The residue at position 104 (S104) is a Phosphoserine. Over residues 112–214 (HKRKERKSSR…KRIEKPRRFS (103 aa)) the composition is skewed to basic residues. The stretch at 230 to 270 (NTAMDAQEALARRLERAKKLQEQREKEMVEKQKQQEIAAAA) forms a coiled coil. A Glycyl lysine isopeptide (Lys-Gly) (interchain with G-Cter in SUMO1); alternate cross-link involves residue K376. K376 is covalently cross-linked (Glycyl lysine isopeptide (Lys-Gly) (interchain with G-Cter in SUMO2); alternate). Phosphoserine is present on S377.

Belongs to the RSRC2 family.

This is Arginine/serine-rich coiled-coil protein 2 (RSRC2) from Pongo abelii (Sumatran orangutan).